Consider the following 367-residue polypeptide: GMP synthase [glutamine-hydrolyzing] subunit B (367 aa).

The 189-residue stretch at 2–190 (FDPASFVKEI…LKLPKEISER (189 aa)) folds into the GMPS ATP-PPase domain. 29-35 (SGGVDST) lines the ATP pocket.

In terms of assembly, heterodimer composed of a glutamine amidotransferase subunit (A) and a GMP-binding subunit (B).

The enzyme catalyses XMP + L-glutamine + ATP + H2O = GMP + L-glutamate + AMP + diphosphate + 2 H(+). The protein operates within purine metabolism; GMP biosynthesis; GMP from XMP (L-Gln route): step 1/1. Functionally, catalyzes the synthesis of GMP from XMP. This chain is GMP synthase [glutamine-hydrolyzing] subunit B, found in Saccharolobus islandicus (strain M.16.27) (Sulfolobus islandicus).